The primary structure comprises 535 residues: T-box transcription factor TBX21 (535 aa).

A disordered region spans residues Met1 to Ala62. Ser53 is subject to Phosphoserine. Phosphotyrosine is present on Tyr77. Residues Ala83–Ala109 are disordered. Phosphotyrosine is present on Tyr118. Positions Leu141–Glu326 form a DNA-binding region, T-box. Position 220 is a phosphotyrosine; by ABL1 (Tyr220). Ser225 carries the phosphoserine modification. Tyr266 bears the Phosphotyrosine; by ABL1 mark. Thr303 carries the post-translational modification Phosphothreonine. Tyr305 carries the phosphotyrosine; by ABL1 modification. A Glycyl lysine isopeptide (Lys-Gly) (interchain with G-Cter in ubiquitin) cross-link involves residue Lys314. Residues Arg449–Asn535 form a disordered region. Over residues Ser503 to Pro520 the composition is skewed to low complexity. Ser513 carries the post-translational modification Phosphoserine. Tyr530 is modified (phosphotyrosine; by ITK).

Interacts with RUNX1, RUNX3, ITK, ABL1, RELA, CDK9 and KDM6B. The phosphorylated form (at Thr-303) interacts with NFATC2. Interacts with SMARCA4 in a KDM6B-dependent manner. Interacts with CCTN1. Interacts with USP10. The phosphorylated form (at Tyr-530) interacts with GATA3. In terms of processing, phosphorylations at Ser-53, Tyr-77, Ser-225 and Ser-513 are regulated by mTORC1. Phosphorylation at Tyr-530 is essential for its interaction GATA3. Phosphorylation at Tyr-220, Tyr-266 and Tyr-305 enhances its transcriptional activator activity. Phosphorylation at Thr-303 is required for its interaction with NFATC2. Post-translationally, ubiquitinated at Lys-314, leading to its degradation by the proteasome. Ubiquitination is essential for controlling protein stability, binding to the T-box-binding element of the IFN-gamma promoter, and for interaction with NFATC2 through induction of phosphorylation at Thr-303. Deubiquitinated by USP10 leading to its stabilization. In terms of tissue distribution, T-cell specific.

It is found in the nucleus. In terms of biological role, lineage-defining transcription factor which initiates Th1 lineage development from naive Th precursor cells both by activating Th1 genetic programs and by repressing the opposing Th2 and Th17 genetic programs. Activates transcription of a set of genes important for Th1 cell function, including those encoding IFN-gamma and the chemokine receptor CXCR3. Induces permissive chromatin accessibilty and CpG methylation in IFNG. Activates IFNG and CXCR3 genes in part by recruiting chromatin remodeling complexes including KDM6B, a SMARCA4-containing SWI/SNF-complex, and an H3K4me2-methyltransferase complex to their promoters and all of these complexes serve to establish a more permissive chromatin state conducive with transcriptional activation. Can activate Th1 genes also via recruitment of Mediator complex and P-TEFb (composed of CDK9 and CCNT1/cyclin-T1) in the form of the super elongation complex (SEC) to super-enhancers and associated genes in activated Th1 cells. Inhibits the Th17 cell lineage commitment by blocking RUNX1-mediated transactivation of Th17 cell-specific transcriptinal regulator RORC. Inhibits the Th2 cell lineage commitment by suppressing the production of Th2 cytokines, such as IL-4, IL-5, and IL- 13, via repression of transcriptional regulators GATA3 and NFATC2. Protects Th1 cells from amplifying aberrant type-I IFN response in an IFN-gamma abundant microenvironment by acting as a repressor of type-I IFN transcription factors and type-I IFN-stimulated genes. Acts as a regulator of antiviral B-cell responses; controls chronic viral infection by promoting the antiviral antibody IgG2a isotype switching and via regulation of a broad antiviral gene expression program. Required for the correct development of natural killer (NK) and mucosal-associated invariant T (MAIT) cells. This Homo sapiens (Human) protein is T-box transcription factor TBX21 (TBX21).